The sequence spans 459 residues: UDP-N-acetylmuramoylalanine--D-glutamate ligase (459 aa).

Residue 131–137 (GANGKST) coordinates ATP.

The protein belongs to the MurCDEF family.

The protein localises to the cytoplasm. The catalysed reaction is UDP-N-acetyl-alpha-D-muramoyl-L-alanine + D-glutamate + ATP = UDP-N-acetyl-alpha-D-muramoyl-L-alanyl-D-glutamate + ADP + phosphate + H(+). The protein operates within cell wall biogenesis; peptidoglycan biosynthesis. In terms of biological role, cell wall formation. Catalyzes the addition of glutamate to the nucleotide precursor UDP-N-acetylmuramoyl-L-alanine (UMA). The chain is UDP-N-acetylmuramoylalanine--D-glutamate ligase from Methylococcus capsulatus (strain ATCC 33009 / NCIMB 11132 / Bath).